The primary structure comprises 205 residues: dITP/XTP pyrophosphatase (205 aa).

A substrate-binding site is contributed by 16–21 (TGNPGK). Mg(2+) contacts are provided by Glu48 and Asp77. The Proton acceptor role is filled by Asp77. Residues Ser78, 162–165 (FGYD), Lys185, and 190–191 (HR) each bind substrate.

The protein belongs to the HAM1 NTPase family. As to quaternary structure, homodimer. The cofactor is Mg(2+).

The enzyme catalyses XTP + H2O = XMP + diphosphate + H(+). It catalyses the reaction dITP + H2O = dIMP + diphosphate + H(+). The catalysed reaction is ITP + H2O = IMP + diphosphate + H(+). In terms of biological role, pyrophosphatase that catalyzes the hydrolysis of nucleoside triphosphates to their monophosphate derivatives, with a high preference for the non-canonical purine nucleotides XTP (xanthosine triphosphate), dITP (deoxyinosine triphosphate) and ITP. Seems to function as a house-cleaning enzyme that removes non-canonical purine nucleotides from the nucleotide pool, thus preventing their incorporation into DNA/RNA and avoiding chromosomal lesions. This Erwinia tasmaniensis (strain DSM 17950 / CFBP 7177 / CIP 109463 / NCPPB 4357 / Et1/99) protein is dITP/XTP pyrophosphatase.